Reading from the N-terminus, the 609-residue chain is Isopenicillin N epimerase component 1 (609 aa).

185-196 (MLSGSGTTGLPK) provides a ligand contact to AMP. The disordered stretch occupies residues 545–570 (STDNHKHNKVPLRDEGVDPRSMGSKV).

It belongs to the ATP-dependent AMP-binding enzyme family.

It carries out the reaction isopenicillin N = penicillin N. It functions in the pathway antibiotic biosynthesis; cephalosporin C biosynthesis. Its function is as follows. Together with cefD2, catalyzes the reversible isomerization between isopenicillin N and penicillin N. This two-component IPN epimerase system may function by two sequential steps, an activation of isopenicillin N by the acyl-CoA synthase component cefD1, followed by epimerization by the acyl-CoA racemase component cefD2. In Hapsidospora chrysogena (Acremonium chrysogenum), this protein is Isopenicillin N epimerase component 1 (cefD1).